Here is a 150-residue protein sequence, read N- to C-terminus: UPF0208 membrane protein VC_1099 (150 aa).

2 helical membrane-spanning segments follow: residues 42 to 62 (FAIKVMPAVAAISVLTQMVFA) and 70 to 90 (AIVVALFAMSLPLQGIWWLGH).

The protein belongs to the UPF0208 family.

The protein resides in the cell inner membrane. In Vibrio cholerae serotype O1 (strain ATCC 39315 / El Tor Inaba N16961), this protein is UPF0208 membrane protein VC_1099.